We begin with the raw amino-acid sequence, 206 residues long: Small ribosomal subunit protein uS4 (206 aa).

The tract at residues 18–45 (NIWGRPKSPVNRREYGPGQHGQRRKGKM) is disordered. The region spanning 94–157 (RRLDAVVYRA…KQLASVLEAV (64 aa)) is the S4 RNA-binding domain.

It belongs to the universal ribosomal protein uS4 family. Part of the 30S ribosomal subunit. Contacts protein S5. The interaction surface between S4 and S5 is involved in control of translational fidelity.

Functionally, one of the primary rRNA binding proteins, it binds directly to 16S rRNA where it nucleates assembly of the body of the 30S subunit. In terms of biological role, with S5 and S12 plays an important role in translational accuracy. This Ruegeria pomeroyi (strain ATCC 700808 / DSM 15171 / DSS-3) (Silicibacter pomeroyi) protein is Small ribosomal subunit protein uS4.